The sequence spans 638 residues: ATP-dependent rRNA helicase spb4 (638 aa).

A Q motif motif is present at residues 14–42 (WDGVSPSLSEWVLEAVSSMGFTRMTPVQA). Residues 45 to 249 (IPLFMAHKDV…RVGLRNPVKV (205 aa)) form the Helicase ATP-binding domain. ATP is bound at residue 58 to 65 (AVTGSGKT). Residues 197–200 (DEAD) carry the DEAD box motif. Positions 283–437 (ALKHILHSVD…PISFSESEAT (155 aa)) constitute a Helicase C-terminal domain. 2 stretches are compositionally biased toward basic and acidic residues: residues 534–554 (LLQE…RKAT) and 577–615 (QRRQ…EERR). Residues 534-638 (LLQESKEGDG…KDEEEFEGFD (105 aa)) are disordered. The stretch at 566 to 619 (RNKKQKRREQKQRRQEKNKWEKMTEEERQKIRETEQMVESIRVKNEEERRLRRA) forms a coiled coil.

Belongs to the DEAD box helicase family. DDX55/SPB4 subfamily. In terms of assembly, component of pre-60S ribosomal complexes.

The protein resides in the nucleus. It localises to the nucleolus. The enzyme catalyses ATP + H2O = ADP + phosphate + H(+). Its function is as follows. ATP-binding RNA helicase involved in the biogenesis of 60S ribosomal subunits. Binds 90S pre-ribosomal particles and dissociates from pre-60S ribosomal particles after processing of 27SB pre-rRNA. Required for the normal formation of 18S rRNA through the processing of pre-rRNAs at sites A0, A1 and A2, and the normal formation of 25S and 5.8S rRNAs through the processing of pre-rRNAs at sites C1 and C2. This is ATP-dependent rRNA helicase spb4 from Aspergillus oryzae (strain ATCC 42149 / RIB 40) (Yellow koji mold).